The sequence spans 105 residues: Endogenous retrovirus group K member 8 Rec protein (105 aa).

The interval 1-48 (MNPSEMQRKAPPRRRRHRNRAPLTHKMNKMVTSEEQMKLPSTKKAEPP) is disordered. Residues 10 to 20 (APPRRRRHRNR) are compositionally biased toward basic residues. The short motif at 13 to 20 (RRRRHRNR) is the Nuclear localization signal element. A Nuclear export signal motif is present at residues 50 to 59 (WAQLKKLTQL).

In terms of assembly, forms homodimers, homotrimers, and homotetramers via a C-terminal domain. Associates with XPO1 and with ZNF145.

The protein localises to the cytoplasm. The protein resides in the nucleus. It localises to the nucleolus. In terms of biological role, retroviral replication requires the nuclear export and translation of unspliced, singly-spliced and multiply-spliced derivatives of the initial genomic transcript. Rec interacts with a highly structured RNA element (RcRE) present in the viral 3'LTR and recruits the cellular nuclear export machinery. This permits export to the cytoplasm of unspliced genomic or incompletely spliced subgenomic viral transcripts. The sequence is that of Endogenous retrovirus group K member 8 Rec protein (ERVK-8) from Homo sapiens (Human).